The sequence spans 178 residues: MSIENLKAALPEYAKDLKLNLGSISRTTVLDEEQLWGTLLASAAATRNAQVLAEIGAEAADNLSAQAYQAALGAVSIMGMNNVFYRGRGFLEGQYDDLRAGLRMNIIANPGVDKANFELWSFAVSSVNGCSHCVVAHEHTLREAGVGREAVLEALKAAAIVCGVAQALTAAQTLAAVG.

Cys-130 serves as the catalytic Proton donor. Cysteines 130 and 133 form a disulfide. Cys-133 acts as the Cysteine sulfenic acid (-SOH) intermediate in catalysis.

Belongs to the AhpD family. In terms of assembly, homotrimer.

The catalysed reaction is N(6)-[(R)-dihydrolipoyl]-L-lysyl-[lipoyl-carrier protein] + a hydroperoxide = N(6)-[(R)-lipoyl]-L-lysyl-[lipoyl-carrier protein] + an alcohol + H2O. Functionally, antioxidant protein with alkyl hydroperoxidase activity. Required for the reduction of the AhpC active site cysteine residues and for the regeneration of the AhpC enzyme activity. This chain is Alkyl hydroperoxide reductase AhpD, found in Mycobacterium marinum (strain ATCC BAA-535 / M).